The primary structure comprises 864 residues: DNA mismatch repair protein MutS (864 aa).

ATP is bound at residue 607-614; sequence GPNMGGKS.

This sequence belongs to the DNA mismatch repair MutS family.

Its function is as follows. This protein is involved in the repair of mismatches in DNA. It is possible that it carries out the mismatch recognition step. This protein has a weak ATPase activity. This Neisseria meningitidis serogroup C / serotype 2a (strain ATCC 700532 / DSM 15464 / FAM18) protein is DNA mismatch repair protein MutS.